The primary structure comprises 101 residues: Small ribosomal subunit protein uS14 (101 aa).

It belongs to the universal ribosomal protein uS14 family. As to quaternary structure, part of the 30S ribosomal subunit. Contacts proteins S3 and S10.

Its function is as follows. Binds 16S rRNA, required for the assembly of 30S particles and may also be responsible for determining the conformation of the 16S rRNA at the A site. This is Small ribosomal subunit protein uS14 from Aliivibrio fischeri (strain MJ11) (Vibrio fischeri).